A 192-amino-acid polypeptide reads, in one-letter code: Probable apo-citrate lyase phosphoribosyl-dephospho-CoA transferase (192 aa).

Belongs to the CitX family.

The catalysed reaction is apo-[citrate lyase ACP] + 2'-(5''-triphospho-alpha-D-ribosyl)-3'-dephospho-CoA = holo-[citrate lyase ACP] + diphosphate. Transfers 2-(5''-triphosphoribosyl)-3'-dephosphocoenzyme-A on a serine residue to the apo-acyl carrier protein (gamma chain) of the citrate lyase to yield holo-acyl carrier protein. This chain is Probable apo-citrate lyase phosphoribosyl-dephospho-CoA transferase, found in Streptococcus pyogenes serotype M6 (strain ATCC BAA-946 / MGAS10394).